A 199-amino-acid chain; its full sequence is Probable GTP-binding protein EngB (199 aa).

An EngB-type G domain is found at 28–199 (DIPEIALAGR…QAWDAILEQI (172 aa)). Residues 36 to 43 (GRSNVGKS), 63 to 67 (GKTQL), 81 to 84 (DVPG), 148 to 151 (TKAD), and 180 to 182 (FSS) each bind GTP. Ser-43 and Thr-65 together coordinate Mg(2+).

This sequence belongs to the TRAFAC class TrmE-Era-EngA-EngB-Septin-like GTPase superfamily. EngB GTPase family. Mg(2+) serves as cofactor.

Functionally, necessary for normal cell division and for the maintenance of normal septation. The chain is Probable GTP-binding protein EngB from Streptococcus uberis (strain ATCC BAA-854 / 0140J).